Consider the following 174-residue polypeptide: Protein RESISTANCE TO POWDERY MILDEW 8.2 (174 aa).

Positions 1-153 constitute an RPW8 domain; sequence MIAEVAAGGA…IMPQPKFEIH (153 aa). A helical transmembrane segment spans residues 7–23; it reads AGGALGLALSVLHEAVK. Residues 68 to 145 are a coiled coil; the sequence is VNKRLKLLLE…EISTKLDKIM (78 aa).

It belongs to the plant RPW8 protein family.

The protein resides in the membrane. Functionally, disease resistance (R) protein that induces localized, salicylic acid-dependent defenses. Confers resistance to powdery mildew (e.g. Erysiphe cichoracearum UCSC1). The sequence is that of Protein RESISTANCE TO POWDERY MILDEW 8.2 from Arabidopsis thaliana (Mouse-ear cress).